The chain runs to 479 residues: MKVLFVASECAPFVKTGGLADVIGAVPKALAPLGVEARVMLPLYPALRVLSEGGKTVWSSDNLHGGAARLLDVRAEGLDLLLLDAPHLFDRGGNIYLDADGTDWPDNPLRFGALSWVAADIAANGAAGWQPEIVHAHDWQAGLVPAYLHQMDAPKPPCVLTIHNIAFQGLFSPDLMAPLGLDAALYTQDGMEFYGNLGFLKAGLAFADKITTVSPTYAREIMQPEFGMGLEGLLRARARDVSGILNGIDTDVWNPETDPALPKSYSLKGLKAKQQSRQAVLERFGLTPPDNAPLFCVISRLTTQKGVDVLLDVVPDLVARGAGLAVLGSGDRDLEAAFVAAAHRFPGAVGVIIGYDEDLSHLMQGGSDAILIPSRFEPCGLTQLYGLRYGTIPVVARTGGLADTIIDANEAALAATCATGVQFAPVTPDALSHAIDRCCDLFAERKTWSGMMRCAMRHPVGWETSSKAYLEVYDRLLGG.

Residue lysine 15 coordinates ADP-alpha-D-glucose.

Belongs to the glycosyltransferase 1 family. Bacterial/plant glycogen synthase subfamily.

The enzyme catalyses [(1-&gt;4)-alpha-D-glucosyl](n) + ADP-alpha-D-glucose = [(1-&gt;4)-alpha-D-glucosyl](n+1) + ADP + H(+). The protein operates within glycan biosynthesis; glycogen biosynthesis. Synthesizes alpha-1,4-glucan chains using ADP-glucose. The sequence is that of Glycogen synthase from Roseobacter denitrificans (strain ATCC 33942 / OCh 114) (Erythrobacter sp. (strain OCh 114)).